Consider the following 283-residue polypeptide: Bifunctional protein FolD (283 aa).

166–168 (GAS) is a binding site for NADP(+).

This sequence belongs to the tetrahydrofolate dehydrogenase/cyclohydrolase family. As to quaternary structure, homodimer.

It carries out the reaction (6R)-5,10-methylene-5,6,7,8-tetrahydrofolate + NADP(+) = (6R)-5,10-methenyltetrahydrofolate + NADPH. The catalysed reaction is (6R)-5,10-methenyltetrahydrofolate + H2O = (6R)-10-formyltetrahydrofolate + H(+). Its pathway is one-carbon metabolism; tetrahydrofolate interconversion. Functionally, catalyzes the oxidation of 5,10-methylenetetrahydrofolate to 5,10-methenyltetrahydrofolate and then the hydrolysis of 5,10-methenyltetrahydrofolate to 10-formyltetrahydrofolate. The polypeptide is Bifunctional protein FolD (Coxiella burnetii (strain CbuK_Q154) (Coxiella burnetii (strain Q154))).